The primary structure comprises 1132 residues: DNA topoisomerase 2 (1132 aa).

Residues Asn68, Asn100, 137–139 (SSN), and 150–157 (GKNGLGVK) each bind ATP. The tract at residues 327–329 (NKP) is interaction with DNA. 363-365 (QNK) provides a ligand contact to ATP. The region spanning 442–577 (CTLIVCEGLS…NLKDFPFISS (136 aa)) is the Toprim domain. Residues Glu448, Asp538, and Asp540 each coordinate Mg(2+). One can recognise a Topo IIA-type catalytic domain in the interval 713 to 1125 (LPHLIDGLKE…NEGQMWLKDI (413 aa)). The active-site O-(5'-phospho-DNA)-tyrosine intermediate is the Tyr803. The tract at residues 979–988 (KLRSYIHTSN) is interaction with DNA.

Belongs to the type II topoisomerase family. The cofactor is Mg(2+). Requires Mn(2+) as cofactor. It depends on Ca(2+) as a cofactor.

It carries out the reaction ATP-dependent breakage, passage and rejoining of double-stranded DNA.. In terms of biological role, can introduce negative superhelical turns into double-stranded circular DNA. This is DNA topoisomerase 2 (TOP2) from Acheta domesticus (House cricket).